The sequence spans 83 residues: Molybdopterin synthase sulfur carrier subunit (83 aa).

1-thioglycine; alternate is present on G83. A Glycyl adenylate; alternate modification is found at G83.

It belongs to the MoaD family. MOCS2A subfamily. As to quaternary structure, heterotetramer; composed of 2 small (MOCS2A) and 2 large (MOCS2B) subunits. C-terminal thiocarboxylation occurs in 2 steps, it is first acyl-adenylated (-COAMP) via the hesA/moeB/thiF part of MOCS3, then thiocarboxylated (-COSH) via the rhodanese domain of MOCS3.

It localises to the cytoplasm. The protein operates within cofactor biosynthesis; molybdopterin biosynthesis. In terms of biological role, acts as a sulfur carrier required for molybdopterin biosynthesis. Component of the molybdopterin synthase complex that catalyzes the conversion of precursor Z into molybdopterin by mediating the incorporation of 2 sulfur atoms into precursor Z to generate a dithiolene group. In the complex, serves as sulfur donor by being thiocarboxylated (-COSH) at its C-terminus by MOCS3. After interaction with MOCS2B, the sulfur is then transferred to precursor Z to form molybdopterin. The polypeptide is Molybdopterin synthase sulfur carrier subunit (Chlamydomonas reinhardtii (Chlamydomonas smithii)).